The chain runs to 151 residues: Ribonuclease H (151 aa).

In terms of domain architecture, RNase H type-1 spans 1-141 (MKNVIIYTDG…ADALANRGID (141 aa)). Aspartate 9, glutamate 47, aspartate 69, and aspartate 133 together coordinate Mg(2+).

This sequence belongs to the RNase H family. Monomer. Mg(2+) is required as a cofactor.

It is found in the cytoplasm. It carries out the reaction Endonucleolytic cleavage to 5'-phosphomonoester.. In terms of biological role, endonuclease that specifically degrades the RNA of RNA-DNA hybrids. This chain is Ribonuclease H, found in Alcanivorax borkumensis (strain ATCC 700651 / DSM 11573 / NCIMB 13689 / SK2).